The sequence spans 439 residues: Ribulose bisphosphate carboxylase/oxygenase activase, chloroplastic (439 aa).

167-174 serves as a coordination point for ATP; sequence GGKGQGKS.

Belongs to the RuBisCO activase family.

It is found in the plastid. It localises to the chloroplast stroma. Activation of RuBisCO (ribulose-1,5-bisphosphate carboxylase/oxygenase; EC 4.1.1.39) involves the ATP-dependent carboxylation of the epsilon-amino group of lysine leading to a carbamate structure. The sequence is that of Ribulose bisphosphate carboxylase/oxygenase activase, chloroplastic (RCA) from Vigna radiata var. radiata (Mung bean).